The chain runs to 988 residues: Chloride channel protein 1 (988 aa).

The Cytoplasmic segment spans residues 1–118 (MEQSRSQQRG…VVRRKLGEDG (118 aa)). Basic and acidic residues predominate over residues 65–75 (HKEQFSDREQD). Residues 65–92 (HKEQFSDREQDIGMPKKTGSSSTVDSKD) form a disordered region. A helical transmembrane segment spans residues 119 to 150 (IFLVLLGLLMALVSWSMDYVSAKSLQAYKWSY). Topologically, residues 151 to 158 (AQMQPSLP) are extracellular. A helical membrane pass occupies residues 159–179 (LQFLVWVTFPLVLILFSALFC). Over 180–183 (HLIS) the chain is Cytoplasmic. The note=Loop between two helices intramembrane region spans 184–189 (PQAVGS). The Selectivity filter part_1 signature appears at 188–192 (GSGIP). A chloride-binding site is contributed by Ser-189. The helical intramembrane region spans 190–195 (GIPEMK). Over 196–208 (TILRGVVLKEYLT) the chain is Cytoplasmic. The helical intramembrane region spans 209-224 (MKAFVAKVVALTAGLG). The note=Loop between two helices intramembrane region spans 225 to 230 (SGIPVG). Residues 230–234 (GKEGP) carry the Selectivity filter part_2 motif. The segment at residues 231–246 (KEGPFVHIASICAAVL) is an intramembrane region (helical). The Cytoplasmic portion of the chain corresponds to 247–268 (SKFMSVFCGVYEQPYYYSDILT). Intramembrane regions (helical) lie at residues 269–280 (VGCAVGVGCCFG) and 281–290 (TPLGGVLFSI). The Cytoplasmic portion of the chain corresponds to 291–301 (EVTSTYFAVRN). The helical transmembrane segment at 302–321 (YWRGFFAATFSAFVFRVLAV) threads the bilayer. Residues 322–347 (WNKDAVTITALFRTNFRMDFPFDLKE) lie on the Extracellular side of the membrane. A helical transmembrane segment spans residues 348–376 (LPAFAAIGICCGLLGAVFVYLHRQVMLGV). At 377–390 (RKHKALSQFLAKHR) the chain is on the cytoplasmic side. The chain crosses the membrane as a helical span at residues 391–408 (LLYPGIVTFVIASFTFPP). Residues 409–414 (GMGQFM) lie on the Extracellular side of the membrane. The segment at residues 415–418 (AGEL) is an intramembrane region (note=Loop between two helices). Positions 419–426 (MPREAIST) form an intramembrane region, helical. Topologically, residues 427 to 457 (LFDNNTWVKHAGDPESLGQSAVWIHPRVNVV) are extracellular. An intramembrane region (helical) is located at residues 458-475 (IIIFLFFVMKFWMSIVAT). The segment at residues 476–482 (TMPIPCG) is an intramembrane region (note=Loop between two helices). The Selectivity filter part_3 signature appears at 482–486 (GGFMP). The segment at residues 483–498 (GFMPVFVLGAAFGRLV) is an intramembrane region (helical). Residue Phe-484 participates in chloride binding. The Extracellular segment spans residues 499–521 (GEIMAMLFPDGILFDDIIYKILP). Positions 522-538 (GGYAVIGAAALTGAVSH) form an intramembrane region, helical. An intramembrane region (note=Loop between two helices) is located at residues 539–540 (TV). Residues 541 to 554 (STAVICFELTGQIA) constitute an intramembrane region (helical). At 555–557 (HIL) the chain is on the extracellular side. The helical intramembrane region spans 558 to 571 (PMMVAVILANMVAQ). The segment at residues 572-575 (SLQP) is an intramembrane region (note=Loop between two helices). An intramembrane region (helical) is located at residues 576-578 (SLY). Tyr-578 lines the chloride pocket. Residues 579–988 (DSIIQVKKLP…DEEDEDELIL (410 aa)) lie on the Cytoplasmic side of the membrane. Residues 609 to 668 (MVRDVKFVSASYTYGELRTLLQTTTVKTLPLVDSKDSMILLGSVERSELQALLQRHLCPE) form the CBS 1 domain. Residues 713–764 (EDEDEDLSGKSELPPSLALHPSTTAPLSPEEPNGPLPGHKQQPEAPEPAGQR) form a disordered region. Positions 821–876 (IDQSPFQLVEQTTLHKTHTLFSLLGLHLAYVTSMGKLRGVLALEELQKAIEGHTKS) constitute a CBS 2 domain. Residues 880 to 988 (LRPPLASFRN…DEEDEDELIL (109 aa)) form a disordered region. Phosphoserine is present on Ser-886. Residues 887-906 (FRNTTSTRKSTGAPPSSAEN) show a composition bias toward polar residues. The segment covering 929–941 (TPVPSPSPEPPLS) has biased composition (pro residues). Acidic residues-rich tracts occupy residues 950-967 (ELEELELVESPGLEEELA) and 979-988 (DEEDEDELIL).

Belongs to the chloride channel (TC 2.A.49) family. ClC-1/CLCN1 subfamily. As to quaternary structure, homodimer. As to expression, predominantly expressed in skeletal muscles.

Its subcellular location is the cell membrane. The protein resides in the sarcolemma. It localises to the T-tubule. It carries out the reaction chloride(in) = chloride(out). It catalyses the reaction thiocyanate(in) = thiocyanate(out). The catalysed reaction is bromide(in) = bromide(out). The enzyme catalyses nitrate(in) = nitrate(out). It carries out the reaction iodide(out) = iodide(in). Modulated by membrane voltage with depolarization favouring channel opening and hyperpolarization favouring channel closure. Inhibited by acidic pH and ATP binding due to a shift of voltage dependence of common gating to more positive voltages. Inhibited by 9-anthracene-carboxylic. Functionally, voltage-gated chloride channel involved in skeletal muscle excitability. Generates most of the plasma membrane chloride conductance in skeletal muscle fibers, stabilizes the resting membrane potential and contributes to the repolarization phase during action potential firing. Forms a homodimeric channel where each subunit has its own ion conduction pathway. Conducts double-barreled currents controlled by two types of gates, two fast glutamate gates that control each subunit independently and a slow common gate that opens and shuts off both subunits simultaneously. Has a significant open probability at muscle resting potential and is further activated upon membrane depolarization. Permeable to small monovalent anions with ion selectivity for chloride &gt; thiocyanate &gt; bromide &gt; nitrate &gt; iodide. The chain is Chloride channel protein 1 from Homo sapiens (Human).